We begin with the raw amino-acid sequence, 90 residues long: Probable Fe(2+)-trafficking protein (90 aa).

The protein belongs to the Fe(2+)-trafficking protein family.

Functionally, could be a mediator in iron transactions between iron acquisition and iron-requiring processes, such as synthesis and/or repair of Fe-S clusters in biosynthetic enzymes. This Pseudomonas fluorescens (strain Pf0-1) protein is Probable Fe(2+)-trafficking protein.